The primary structure comprises 148 residues: MRAVIQRVKKSWVEVDGKVVGSINEGLNVFLGVRKGDTEEDIEKLVNKILNLRIFEDERGKFQYSVLDIKGEILVVSQFTLYANVKKGRRPSFEEAEEPKRAKELYEKFVDKIKESGLKVETGIFGAMMDVFIENWGPVTIIIDSREI.

A Gly-cisPro motif, important for rejection of L-amino acids motif is present at residues 137–138 (GP).

Belongs to the DTD family. As to quaternary structure, homodimer.

Its subcellular location is the cytoplasm. The enzyme catalyses glycyl-tRNA(Ala) + H2O = tRNA(Ala) + glycine + H(+). It carries out the reaction a D-aminoacyl-tRNA + H2O = a tRNA + a D-alpha-amino acid + H(+). Its function is as follows. An aminoacyl-tRNA editing enzyme that deacylates mischarged D-aminoacyl-tRNAs. Also deacylates mischarged glycyl-tRNA(Ala), protecting cells against glycine mischarging by AlaRS. Acts via tRNA-based rather than protein-based catalysis; rejects L-amino acids rather than detecting D-amino acids in the active site. By recycling D-aminoacyl-tRNA to D-amino acids and free tRNA molecules, this enzyme counteracts the toxicity associated with the formation of D-aminoacyl-tRNA entities in vivo and helps enforce protein L-homochirality. The chain is D-aminoacyl-tRNA deacylase from Aquifex aeolicus (strain VF5).